The following is an 87-amino-acid chain: Glutaredoxin (87 aa).

Positions 1 to 87 (MFVVIFGRPG…LMKEQFGIVA (87 aa)) constitute a Glutaredoxin domain. Cysteines 11 and 14 form a disulfide.

It belongs to the glutaredoxin family. As to quaternary structure, monomer.

The protein resides in the cytoplasm. In terms of biological role, has a glutathione-disulfide oxidoreductase activity in the presence of NADPH and glutathione reductase. Reduces low molecular weight disulfides and proteins. This is Glutaredoxin (grxA) from Haemophilus influenzae (strain ATCC 51907 / DSM 11121 / KW20 / Rd).